Here is a 122-residue protein sequence, read N- to C-terminus: Aspartate 1-decarboxylase (122 aa).

The Schiff-base intermediate with substrate; via pyruvic acid role is filled by Ser25. Ser25 carries the post-translational modification Pyruvic acid (Ser). Thr57 serves as a coordination point for substrate. Residue Tyr58 is the Proton donor of the active site. Substrate is bound at residue 73 to 75 (GAA).

Belongs to the PanD family. In terms of assembly, heterooctamer of four alpha and four beta subunits. The cofactor is pyruvate. Post-translationally, is synthesized initially as an inactive proenzyme, which is activated by self-cleavage at a specific serine bond to produce a beta-subunit with a hydroxyl group at its C-terminus and an alpha-subunit with a pyruvoyl group at its N-terminus.

The protein resides in the cytoplasm. It carries out the reaction L-aspartate + H(+) = beta-alanine + CO2. It functions in the pathway cofactor biosynthesis; (R)-pantothenate biosynthesis; beta-alanine from L-aspartate: step 1/1. Catalyzes the pyruvoyl-dependent decarboxylation of aspartate to produce beta-alanine. The chain is Aspartate 1-decarboxylase from Bordetella parapertussis (strain 12822 / ATCC BAA-587 / NCTC 13253).